A 441-amino-acid polypeptide reads, in one-letter code: Ribulose bisphosphate carboxylase (441 aa).

The active-site Proton acceptor is Lys-160. A substrate-binding site is contributed by Lys-162. Residues Lys-186, Asp-188, and Glu-189 each coordinate Mg(2+). Lys-186 bears the N6-carboxylysine mark. Residue His-278 is the Proton acceptor of the active site. Substrate contacts are provided by residues Arg-279, His-311, 364-366 (SGG), and 386-389 (QVGG).

This sequence belongs to the RuBisCO large chain family. Type III subfamily. As to quaternary structure, homodimer. In contrast to form I RuBisCO, the form III RuBisCO is composed solely of large subunits. The cofactor is Mg(2+).

The catalysed reaction is 2 (2R)-3-phosphoglycerate + 2 H(+) = D-ribulose 1,5-bisphosphate + CO2 + H2O. It catalyses the reaction D-ribulose 1,5-bisphosphate + O2 = 2-phosphoglycolate + (2R)-3-phosphoglycerate + 2 H(+). Its activity is regulated as follows. Reversibly inhibited by O(2). Its function is as follows. Catalyzes the addition of molecular CO(2) and H(2)O to ribulose 1,5-bisphosphate (RuBP), generating two molecules of 3-phosphoglycerate (3-PGA). Functions in an archaeal AMP degradation pathway, together with AMP phosphorylase and R15P isomerase. The chain is Ribulose bisphosphate carboxylase from Archaeoglobus fulgidus (strain ATCC 49558 / DSM 4304 / JCM 9628 / NBRC 100126 / VC-16).